A 323-amino-acid chain; its full sequence is Zinc finger protein 784 (323 aa).

Positions 1-26 (MAAARPEAQSRSSPTPESRSQEPLDL) are disordered. The span at 9–18 (QSRSSPTPES) shows a compositional bias: polar residues. A Phosphoserine modification is found at S13. C2H2-type zinc fingers lie at residues 65–87 (FHCALCPAAFRLVSELLFHEHGH), 101–123 (SRCHVCGHSCPGPASLRAHYSLH), 129–151 (YRCALCPRAFKALAPLLRHQHRH), 196–218 (FACRFCAKPFRRSSDMRDHERVH), 224–246 (YHCGICGKGFTQSSVLSGHARIH), and 252–274 (FRCTLCDRTFNNSSNFRKHQRTH). Residues 269 to 323 (KHQRTHFHGPGPGLGDSGGQLGSSAAEGSGSGCGVGDPAEEGRGETAKVKVEADQ) form a disordered region. Gly residues predominate over residues 278-289 (PGPGLGDSGGQL). The span at 308 to 323 (EEGRGETAKVKVEADQ) shows a compositional bias: basic and acidic residues. K318 participates in a covalent cross-link: Glycyl lysine isopeptide (Lys-Gly) (interchain with G-Cter in SUMO2).

The protein belongs to the krueppel C2H2-type zinc-finger protein family.

Its subcellular location is the nucleus. Its function is as follows. May be involved in transcriptional regulation. In Homo sapiens (Human), this protein is Zinc finger protein 784 (ZNF784).